The sequence spans 386 residues: Inactive GDSL esterase/lipase-like protein 23 (386 aa).

The N-terminal stretch at 1 to 29 is a signal peptide; it reads MMAKNCNLVSVLCVFLVLTLFNKPITVAG. Serine 43 acts as the Nucleophile in catalysis. Asparagine 105, asparagine 165, and asparagine 288 each carry an N-linked (GlcNAc...) asparagine glycan. Residues aspartate 322 and histidine 325 contribute to the active site.

It belongs to the 'GDSL' lipolytic enzyme family. As to quaternary structure, part of the PYK10 complex. Interacts with MVP1. In terms of tissue distribution, expressed mainly in roots.

It is found in the endoplasmic reticulum. Involved in the control of the PYK10 complex size and possibly substrate specificity. May be exported from the endoplasmic reticulum upon interaction with MVP1. This is Inactive GDSL esterase/lipase-like protein 23 (GLL23) from Arabidopsis thaliana (Mouse-ear cress).